The primary structure comprises 244 residues: DNA repair protein RecO (244 aa).

The protein belongs to the RecO family.

Involved in DNA repair and RecF pathway recombination. This Nocardioides sp. (strain ATCC BAA-499 / JS614) protein is DNA repair protein RecO.